A 71-amino-acid polypeptide reads, in one-letter code: uncharacterized protein (71 aa).

An N-terminal signal peptide occupies residues Met-1–Thr-21.

This is an uncharacterized protein from Haemophilus influenzae (strain ATCC 51907 / DSM 11121 / KW20 / Rd).